The sequence spans 457 residues: Argininosuccinate lyase (457 aa).

Belongs to the lyase 1 family. Argininosuccinate lyase subfamily.

It is found in the cytoplasm. The catalysed reaction is 2-(N(omega)-L-arginino)succinate = fumarate + L-arginine. It participates in amino-acid biosynthesis; L-arginine biosynthesis; L-arginine from L-ornithine and carbamoyl phosphate: step 3/3. The chain is Argininosuccinate lyase from Sodalis glossinidius (strain morsitans).